We begin with the raw amino-acid sequence, 152 residues long: Ribosome maturation factor RimP (152 aa).

Belongs to the RimP family.

The protein resides in the cytoplasm. In terms of biological role, required for maturation of 30S ribosomal subunits. The chain is Ribosome maturation factor RimP from Pectobacterium atrosepticum (strain SCRI 1043 / ATCC BAA-672) (Erwinia carotovora subsp. atroseptica).